The primary structure comprises 276 residues: MIRPDRCPWQPCPSGRYLSRPSGRVPRSTMMTPMTAMPAVTAMPPETAAPPETAAPARPLRPVQALLVVDVQTAFVSGAEAVPEAARVLDRTRGLLARARTAGALVVHLQNDGAPGAVDAPHTPGWELHLPVEPGPREHVVRKTEDDGFADTGLGALLDAAGVTELAVCGVLSEMCVAATARTALELGHRVVLPHDAHATYDIPAAPDISDTVPAAMSSRAAEWALGDEVEIVPRAAAVPFVAPPLAPAPEAPAAAAAPAAGTGLSPAGPPPAPAR.

Cysteine 176 functions as the Nucleophile in the catalytic mechanism. Residues 250-276 (PEAPAAAAAPAAGTGLSPAGPPPAPAR) form a disordered region. Residues 252–267 (APAAAAAPAAGTGLSP) show a composition bias toward low complexity.

The protein belongs to the isochorismatase family. In terms of assembly, homodimer. Requires Does not require a metal cofactor. as cofactor.

The catalysed reaction is streptothricin F + H2O = streptothricin F acid. Its function is as follows. Catalyzes the hydrolysis of the amide bond of streptolidine lactam, thereby conferring streptothricin (ST) resistance. Can hydrolyze streptothricin-F and streptothricin-D. However, this strain is believed to be a ST nonproducer, which raises the possibility that its true role may not be its involvement in self-resistance to STs. May catalyze the hydrolysis of naturally occurring cyclic amide compounds that are structurally related to STs. This is Streptothricin hydrolase (sttH) from Streptomyces noursei (Streptomyces albulus).